Here is a 1097-residue protein sequence, read N- to C-terminus: Transmembrane protein 132D (1097 aa).

A signal peptide spans 1–30 (MCPSEMGTLWYLWSPVLISLAALFSKVTEG). Topologically, residues 31–913 (RGILESIQRF…LDQAAKGLSD (883 aa)) are extracellular. Over residues 233 to 245 (DERGDCAKEDSRK) the composition is skewed to basic and acidic residues. Residues 233 to 263 (DERGDCAKEDSRKSGGTPAGHNDVDESSPPL) form a disordered region. The chain crosses the membrane as a helical span at residues 914–934 (LEIGMYALLGVFCLAILVFLI). Over 935-1097 (NCVTFALKYR…SCMERLHEHV (163 aa)) the chain is Cytoplasmic. The tract at residues 1021 to 1042 (MLTDDQEQKSEPPTSPTSKRKR) is disordered.

Belongs to the TMEM132 family. In terms of tissue distribution, expressed in mature oligodendrocytes in the white and gray matter of the brain.

It localises to the membrane. Its function is as follows. Regulates neuronal morphology via inhibition of the WAVE regulatory complex (WCR), a complex that controls F-actin cytoskeletal dynamics. The sequence is that of Transmembrane protein 132D (Tmem132d) from Mus musculus (Mouse).